A 558-amino-acid chain; its full sequence is MAALTRNPEFQKLLEWHRANSANLKLRELFEADPERFNHFSLNLNTNHGHILLDYSKNLVNKEVLHMLVDLAKSRGVEAARDNMFSGLKINSTEDRAVLHVALRNRSNRSIMMDGKDVMPEVNKVLDKMKSFCQRVRSGDWKGYTGKAITDIINIGIGGSDLGPLMVTEALKPYSKGGPRVWFVSNIDGTHIAKTLANLNPESSLFIIASKTFTTQETITNAETAKEWFLQAAKDPSAVAKHFVALSTNTDKVKEFGIDPKNMFEFWDWVGGRYSLWSAIGLSIALHVGFDHFEQLLSGAHWMDQHFMKTPLDKNAPVLLALLGIWYINFYGCETHAMLPYDQYMHRFAAYFQQGDMESNGKYITKSGARVDYQTGPIVWGEPGTNGQHAFYQLIHQGTKMIPCDFLIPVQTQHPIRNGLHHKILLANFLAQTEALMKGKSPEEARKELQAAGKSPEELEKLLPHKVFEGNRPTNSIVFTKLTPFILGALIAMYEHKIFVQGIIWDINSFDQWGVELGKQLAKKIEPELDGSSAVTSHDSSTNGLIGFIKLQRDTKID.

A2 carries the post-translational modification N-acetylalanine. Residue K12 is modified to N6-acetyllysine. 2 positions are modified to phosphoserine: S86 and S107. The residue at position 142 (K142) is an N6-acetyllysine. 159-160 (GS) contributes to the D-glucose 6-phosphate binding site. Position 185 is a phosphoserine; by CK2 (S185). 210 to 215 (SKTFTT) is a binding site for D-glucose 6-phosphate. Residue T250 is modified to Phosphothreonine. D-glucose 6-phosphate contacts are provided by Q354, E358, and H389. Catalysis depends on E358, which acts as the Proton donor. H389 is an active-site residue. K454 is subject to N6-acetyllysine; alternate. K454 carries the post-translational modification N6-malonyllysine; alternate. Residue K454 is modified to N6-succinyllysine; alternate. A Phosphoserine modification is found at S455. Position 519 (K519) interacts with D-glucose 6-phosphate. K519 is an active-site residue.

It belongs to the GPI family. As to quaternary structure, homodimer; in the catalytically active form. Monomer in the secreted form. In terms of processing, phosphorylation at Ser-185 by CK2 has been shown to decrease enzymatic activity and may contribute to secretion by a non-classical secretory pathway. ISGylated.

Its subcellular location is the cytoplasm. It localises to the secreted. It catalyses the reaction alpha-D-glucose 6-phosphate = beta-D-fructose 6-phosphate. It participates in carbohydrate degradation; glycolysis; D-glyceraldehyde 3-phosphate and glycerone phosphate from D-glucose: step 2/4. In terms of biological role, in the cytoplasm, catalyzes the conversion of glucose-6-phosphate to fructose-6-phosphate, the second step in glycolysis, and the reverse reaction during gluconeogenesis. Besides it's role as a glycolytic enzyme, also acts as a secreted cytokine: acts as an angiogenic factor (AMF) that stimulates endothelial cell motility. Acts as a neurotrophic factor, neuroleukin, for spinal and sensory neurons. It is secreted by lectin-stimulated T-cells and induces immunoglobulin secretion. This Rattus norvegicus (Rat) protein is Glucose-6-phosphate isomerase.